A 474-amino-acid chain; its full sequence is MSAFQQAQAPARAIDPDSDVEEEALVNDYKEQVQYEEDDAESTQMSLAAQTDDIQSRLAAAAQPLDYSAGLEVKFSSYDSYCSLFHFILNSEGPVDLEPPSYYWAWDVIDEFIYQFNSFSSYRARIARQGNNEEEIAMLRENPNTWGCYSVLNVLYSLIQKSQITEQLAAMKRNEDPAAVAGEYGSKNLYKMLGYFSIIGLLRVHTLLGDFSLALKTLDDIELNKKAMFARVMAAHFTTYYYVGFSYMMMRRYADAIRMFSHILVYVSRTKNFQKNAQYDSITKKNDQMYALIAICVAFQPTRLDDTIHTALREKYGDQLLKLQRGGPEALPIYEELFRTACPKFISPVPPNFDEPEANIDPIEHHLSVFMDEVKTNMFNPTIKSYLRLYTTMDLKKLAGFLEVKPEELRGWLMVNKQRTKQLRWTDGGLLEGELVNVSDLDYALQGDLIHISEAKVGRKLVDWYLRNLSRTYA.

A PCI domain is found at 255-449 (DAIRMFSHIL…DLDYALQGDL (195 aa)).

Belongs to the eIF-3 subunit L family. In terms of assembly, component of the eukaryotic translation initiation factor 3 (eIF-3) complex.

The protein localises to the cytoplasm. Component of the eukaryotic translation initiation factor 3 (eIF-3) complex, which is involved in protein synthesis of a specialized repertoire of mRNAs and, together with other initiation factors, stimulates binding of mRNA and methionyl-tRNAi to the 40S ribosome. The eIF-3 complex specifically targets and initiates translation of a subset of mRNAs involved in cell proliferation. This Neurospora crassa (strain ATCC 24698 / 74-OR23-1A / CBS 708.71 / DSM 1257 / FGSC 987) protein is Eukaryotic translation initiation factor 3 subunit L.